A 474-amino-acid chain; its full sequence is tRNA-2-methylthio-N(6)-dimethylallyladenosine synthase (474 aa).

Residues 3–120 (KKLHIKTWGC…LPEMINSVRG (118 aa)) form the MTTase N-terminal domain. Cys-12, Cys-49, Cys-83, Cys-157, Cys-161, and Cys-164 together coordinate [4Fe-4S] cluster. The Radical SAM core domain occupies 143–375 (RAEGPTAFVS…QERINQQAMA (233 aa)). In terms of domain architecture, TRAM spans 378–441 (RRMLGTTQRI…PNSLRGKVVR (64 aa)).

Belongs to the methylthiotransferase family. MiaB subfamily. As to quaternary structure, monomer. The cofactor is [4Fe-4S] cluster.

The protein localises to the cytoplasm. The catalysed reaction is N(6)-dimethylallyladenosine(37) in tRNA + (sulfur carrier)-SH + AH2 + 2 S-adenosyl-L-methionine = 2-methylsulfanyl-N(6)-dimethylallyladenosine(37) in tRNA + (sulfur carrier)-H + 5'-deoxyadenosine + L-methionine + A + S-adenosyl-L-homocysteine + 2 H(+). Functionally, catalyzes the methylthiolation of N6-(dimethylallyl)adenosine (i(6)A), leading to the formation of 2-methylthio-N6-(dimethylallyl)adenosine (ms(2)i(6)A) at position 37 in tRNAs that read codons beginning with uridine. This is tRNA-2-methylthio-N(6)-dimethylallyladenosine synthase from Shigella boydii serotype 4 (strain Sb227).